Consider the following 132-residue polypeptide: Two-component response regulator ORR42 (132 aa).

The Response regulatory domain maps to 11 to 125; the sequence is RALLVEDIKV…LEHILQETRS (115 aa). Asp-61 carries the 4-aspartylphosphate modification.

The protein belongs to the ARR family. Type-C subfamily. Two-component system major event consists of a His-to-Asp phosphorelay between a sensor histidine kinase (HK) and a response regulator (RR). In plants, the His-to-Asp phosphorelay involves an additional intermediate named Histidine-containing phosphotransfer protein (HPt). This multistep phosphorelay consists of a His-Asp-His-Asp sequential transfer of a phosphate group between first a His and an Asp of the HK protein, followed by the transfer to a conserved His of the HPt protein and finally the transfer to an Asp in the receiver domain of the RR protein.

Functions as a response regulator involved in His-to-Asp phosphorelay signal transduction system. Phosphorylation of the Asp residue in the receiver domain activates the ability of the protein to promote the transcription of target genes. May directly activate some type-A response regulators in response to cytokinins. The polypeptide is Two-component response regulator ORR42 (Oryza sativa subsp. japonica (Rice)).